A 237-amino-acid chain; its full sequence is NAD-dependent protein deacetylase (237 aa).

Residues 1–237 enclose the Deacetylase sirtuin-type domain; it reads MQDITQAEAI…TIFAELTIKE (237 aa). Positions 25, 29, 37, 100, 102, 103, and 118 each coordinate NAD(+). Nicotinamide contacts are provided by isoleucine 102 and aspartate 103. The active-site Proton acceptor is the histidine 118. Positions 126, 129, 144, and 147 each coordinate Zn(2+). NAD(+)-binding residues include threonine 185, serine 186, and asparagine 209.

This sequence belongs to the sirtuin family. Class U subfamily.

It localises to the cytoplasm. It catalyses the reaction N(6)-acetyl-L-lysyl-[protein] + NAD(+) + H2O = 2''-O-acetyl-ADP-D-ribose + nicotinamide + L-lysyl-[protein]. NAD-dependent protein deacetylase which modulates the activities of several enzymes which are inactive in their acetylated form. The polypeptide is NAD-dependent protein deacetylase (Enterococcus faecalis (strain ATCC 700802 / V583)).